The sequence spans 939 residues: Collagen-like protein 3 (939 aa).

Residues N15, N35, N39, and N82 are each glycosylated (N-linked (GlcNAc...) asparagine; by host). The span at 84-95 (SGSSGPSGPQGP) shows a compositional bias: low complexity. Disordered regions lie at residues 84–332 (SGSS…DLGN) and 358–697 (SIKG…KGEA). 8 Collagen-like domains span residues 88–147 (GPSG…NGDK), 148–207 (GNKG…KGDK), 211–330 (GNKG…SPDL), 364–423 (GDKG…SGAD), 427–486 (GDKG…KGEK), 493–552 (GESG…KGSK), 564–622 (GDKG…KGDV), and 638–697 (GDKG…KGEA). Composition is skewed to basic and acidic residues over residues 96 to 110 (KGEKGSNGDKGDKGE), 123 to 182 (DADK…DPGI), 189 to 230 (DADK…DIGL), 237 to 260 (DADKGDKGDKGSKGDKGDKGDIGP), 267 to 288 (DADKGDKGDKGSKGDKGDKGTK), 297 to 314 (KGDKGDKGDKGIKGDKGE), 360 to 371 (KGDKGDKGDTGL), 378 to 416 (DADKGEKGDPGNKGDKGNKGDKGSKGDKGDKGDKGDTGL), 423 to 491 (DADK…DVGI), 498 to 527 (DADKGDKGEKGDKGVNGDKGDKGSKGDTGI), 537 to 552 (KGDKGSKGDKGDKGSK), 560 to 580 (KGDKGDKGDKGSKGDKGDIGI), and 589 to 684 (KGDK…DKGD). N788, N820, N858, N919, and N925 each carry an N-linked (GlcNAc...) asparagine; by host glycan. The interval 896-923 (NGETGAPTTDSGTNYGAGGGGGGNGTQG) is disordered. Residues 910–923 (YGAGGGGGGNGTQG) are compositionally biased toward gly residues.

May be hydroxylated on lysine by the viral-encoded procollagen-lysine,2-oxoglutarate 5-dioxygenase.

The protein resides in the virion. May participate in the formation of a layer of cross-linked glycosylated fibrils at the viral surface thus giving it a hairy-like appearance. This is Collagen-like protein 3 from Acanthamoeba polyphaga (Amoeba).